Reading from the N-terminus, the 1614-residue chain is Chitin synthase csmA (1614 aa).

The segment at 1-22 (MAGPAPSGRTPSHAQSSLPSLP) is disordered. The Myosin motor domain occupies 1–788 (MAGPAPSGRT…CWADLAKLGE (788 aa)). Over residues 9–19 (RTPSHAQSSLP) the composition is skewed to polar residues. 105–112 (GESGSGKT) is an ATP binding site. Positions 600–650 (QVSSKPMRMPSMARRKAGPSRLAFDAPEGDDQDEYDSQAGSMSKSSARRKS) are disordered. Residues 626–635 (PEGDDQDEYD) are compositionally biased toward acidic residues. Residues 668–692 (LDIVSKCLNSANLNPYFVFCLKPND) are actin-binding. A run of 2 helical transmembrane segments spans residues 898–918 (WMAI…KTFG) and 937–957 (LIIW…PGLI). Residues 961 to 1020 (QHVYSTAELSSHNGKDGHNSFVAIRGIVFNLDKFMPSHYPDIVPEKSLKKYAGTDATGLF) enclose the Cytochrome b5 heme-binding domain. N-linked (GlcNAc...) asparagine glycosylation is found at Asn-1047 and Asn-1072. Residues 1209–1229 (FILAISIFICLIVVFKFLAAL) form a helical membrane-spanning segment. Residue Asn-1572 is glycosylated (N-linked (GlcNAc...) asparagine).

This sequence in the N-terminal section; belongs to the TRAFAC class myosin-kinesin ATPase superfamily. Myosin family. The protein in the C-terminal section; belongs to the chitin synthase family. Class V subfamily.

The protein resides in the cell membrane. It localises to the cell septum. The protein localises to the cell tip. It carries out the reaction [(1-&gt;4)-N-acetyl-beta-D-glucosaminyl](n) + UDP-N-acetyl-alpha-D-glucosamine = [(1-&gt;4)-N-acetyl-beta-D-glucosaminyl](n+1) + UDP + H(+). Functionally, polymerizes chitin, a structural polymer of the cell wall and septum, by transferring the sugar moiety of UDP-GlcNAc to the non-reducing end of the growing chitin polymer. Acts as the major chitin synthase in Aspergillus niger involved in cell wall integrity which is principally responsible for chitin synthesis at the lateral cell wall. Plays an important role in septal growth or maintenance. Mediates colony spore formation. The chain is Chitin synthase csmA from Aspergillus niger (strain ATCC MYA-4892 / CBS 513.88 / FGSC A1513).